We begin with the raw amino-acid sequence, 128 residues long: Iron-sulfur cluster insertion protein ErpA (128 aa).

Iron-sulfur cluster-binding residues include cysteine 56, cysteine 120, and cysteine 122.

This sequence belongs to the HesB/IscA family. As to quaternary structure, homodimer. The cofactor is iron-sulfur cluster.

Its function is as follows. Required for insertion of 4Fe-4S clusters for at least IspG. This is Iron-sulfur cluster insertion protein ErpA from Xanthomonas campestris pv. campestris (strain 8004).